Here is a 65-residue protein sequence, read N- to C-terminus: UPF0434 protein HS_0657 (65 aa).

It belongs to the UPF0434 family.

The chain is UPF0434 protein HS_0657 from Histophilus somni (strain 129Pt) (Haemophilus somnus).